A 398-amino-acid chain; its full sequence is O-methyltransferase mpaG (398 aa).

(4E,8E)-10-(4,6-dihydroxy-7-methyl-3-oxo-1,3-dihydro-2-benzofuran-5-yl)-4,8-dimethyldeca-4,8-dienoate is bound at residue S144. S144 is a 4-farnesyl-3,5-dihydroxy-6-methylphthalide binding site. S144 contacts 6-O-desmethylmycophenolate. N197 provides a ligand contact to S-adenosyl-L-homocysteine. Y199 is a binding site for (4E,8E)-10-(4,6-dihydroxy-7-methyl-3-oxo-1,3-dihydro-2-benzofuran-5-yl)-4,8-dimethyldeca-4,8-dienoate. Position 199 (Y199) interacts with 4-farnesyl-3,5-dihydroxy-6-methylphthalide. Y199 is a 6-O-desmethylmycophenolate binding site. S-adenosyl-L-homocysteine contacts are provided by Y203, D237, G239, H244, D245, D264, and R265. Position 264 (D264) interacts with S-adenosyl-L-methionine. (4E,8E)-10-(4,6-dihydroxy-7-methyl-3-oxo-1,3-dihydro-2-benzofuran-5-yl)-4,8-dimethyldeca-4,8-dienoate is bound by residues R265 and Q267. Position 265 (R265) interacts with 6-O-desmethylmycophenolate. Residues D286, I287, and H302 each coordinate S-adenosyl-L-homocysteine. S303 lines the (4E,8E)-10-(4,6-dihydroxy-7-methyl-3-oxo-1,3-dihydro-2-benzofuran-5-yl)-4,8-dimethyldeca-4,8-dienoate pocket. 4-farnesyl-3,5-dihydroxy-6-methylphthalide is bound at residue S303. A 6-O-desmethylmycophenolate-binding site is contributed by S303. The Proton acceptor role is filled by H306. Catalysis depends on residues E335 and E362.

Belongs to the class I-like SAM-binding methyltransferase superfamily. Cation-independent O-methyltransferase family. COMT subfamily. As to quaternary structure, homodimer.

The protein localises to the cytoplasm. It is found in the cytosol. The catalysed reaction is (4E,8E)-10-(4,6-dihydroxy-7-methyl-3-oxo-1,3-dihydro-2-benzofuran-5-yl)-4,8-dimethyldeca-4,8-dienoate + S-adenosyl-L-methionine = (4E,8E)-10-(4-hydroxy-6-methoxy-7-methyl-3-oxo-1,3-dihydro-2-benzofuran-5-yl)-4,8-dimethyldeca-4,8-dienoate + S-adenosyl-L-homocysteine + H(+). The enzyme catalyses 4-farnesyl-3,5-dihydroxy-6-methylphthalide + S-adenosyl-L-methionine = 4-farnesyl-3,5-dihydroxy-6-methoxylphthalide + S-adenosyl-L-homocysteine + H(+). It carries out the reaction 6-O-desmethylmycophenolate + S-adenosyl-L-methionine = mycophenolate + S-adenosyl-L-homocysteine + H(+). Its pathway is secondary metabolite biosynthesis; terpenoid biosynthesis. Its function is as follows. O-methyltransferase; part of the gene cluster that mediates the biosynthesis of mycophenolic acid (MPA), the first isolated antibiotic natural product in the world obtained from a culture of Penicillium brevicompactum in 1893. MpaG methylates farnesyl-DHMP-3C (FDHMP-3C) to yield MFDHMP-3C. The first step of the pathway is the synthesis of 5-methylorsellinic acid (5MOA) by the cytosolic polyketide synthase mpaC. 5MOA is then converted to the phthalide compound 5,7-dihydroxy-4,6-dimethylphthalide (DHMP) by the endoplasmic reticulum-bound cytochrome P450 monooxygenase mpaDE. MpaDE first catalyzes hydroxylation of 5-MOA to 4,6-dihydroxy-2-(hydroxymethyl)-3-methylbenzoic acid (DHMB). MpaDE then acts as a lactone synthase that catalyzes the ring closure to convert DHMB into DHMP. The next step is the prenylation of DHMP by the Golgi apparatus-associated prenyltransferase mpaA to yield farnesyl-DHMP (FDHMP). The ER-bound oxygenase mpaB then mediates the oxidative cleavage the C19-C20 double bond in FDHMP to yield FDHMP-3C via a mycophenolic aldehyde intermediate. The O-methyltransferase mpaG catalyzes the methylation of FDHMP-3C to yield MFDHMP-3C. MpaG and mpaB can also switch the order in which they act and, in this case, the conversion of FDHMP to MFDHMP-3C can take place via 5-O-methyl-FDHMP (MFDHMP). After the cytosolic methylation of FDHMP-3C, MFDHMP-3C enters into peroxisomes probably via free diffusion due to its low molecular weight. Upon a peroxisomal CoA ligation reaction, catalyzed by a beta-oxidation component enzyme acyl-CoA ligase ACL891, MFDHMP-3C-CoA would then be restricted to peroxisomes for the following beta-oxidation pathway steps. The peroxisomal beta-oxidation machinery than converts MFDHMP-3C-CoA into MPA_CoA, via a beta-oxidation chain-shortening process. Finally mpaH acts as a peroxisomal acyl-CoA hydrolase with high substrate specificity toward MPA-CoA to release the final product MPA. MpaH can also hydrolyze DMMPA-CoA to release demethylmycophenolic acid (DMMPA) that is further converted to MPA by mpaG. The sequence is that of O-methyltransferase mpaG from Penicillium brevicompactum.